Here is a 120-residue protein sequence, read N- to C-terminus: Large ribosomal subunit protein bL19 (120 aa).

The protein belongs to the bacterial ribosomal protein bL19 family.

Its function is as follows. This protein is located at the 30S-50S ribosomal subunit interface and may play a role in the structure and function of the aminoacyl-tRNA binding site. The polypeptide is Large ribosomal subunit protein bL19 (Marinomonas sp. (strain MWYL1)).